We begin with the raw amino-acid sequence, 548 residues long: Glucose-6-phosphate isomerase (548 aa).

The active-site Proton donor is the Glu-355. Residues His-386 and Lys-514 contribute to the active site.

The protein belongs to the GPI family.

The protein localises to the cytoplasm. It catalyses the reaction alpha-D-glucose 6-phosphate = beta-D-fructose 6-phosphate. It participates in carbohydrate biosynthesis; gluconeogenesis. It functions in the pathway carbohydrate degradation; glycolysis; D-glyceraldehyde 3-phosphate and glycerone phosphate from D-glucose: step 2/4. Catalyzes the reversible isomerization of glucose-6-phosphate to fructose-6-phosphate. The protein is Glucose-6-phosphate isomerase of Photorhabdus laumondii subsp. laumondii (strain DSM 15139 / CIP 105565 / TT01) (Photorhabdus luminescens subsp. laumondii).